Reading from the N-terminus, the 328-residue chain is GMP reductase (328 aa).

C176 serves as the catalytic Thioimidate intermediate. 205 to 228 (IIADGGIRTHGDIAKSIRFGASMI) serves as a coordination point for NADP(+).

The protein belongs to the IMPDH/GMPR family. GuaC type 2 subfamily.

It catalyses the reaction IMP + NH4(+) + NADP(+) = GMP + NADPH + 2 H(+). In terms of biological role, catalyzes the irreversible NADPH-dependent deamination of GMP to IMP. It functions in the conversion of nucleobase, nucleoside and nucleotide derivatives of G to A nucleotides, and in maintaining the intracellular balance of A and G nucleotides. The polypeptide is GMP reductase (Streptococcus pneumoniae (strain CGSP14)).